The chain runs to 380 residues: DNA replication and repair protein RecF (380 aa).

Residue 30-37 (GQNGQGKT) coordinates ATP.

This sequence belongs to the RecF family.

Its subcellular location is the cytoplasm. Its function is as follows. The RecF protein is involved in DNA metabolism; it is required for DNA replication and normal SOS inducibility. RecF binds preferentially to single-stranded, linear DNA. It also seems to bind ATP. The polypeptide is DNA replication and repair protein RecF (Myxococcus xanthus (strain DK1622)).